The primary structure comprises 26 residues: Superoxide dismutase [Cu-Zn] (26 aa).

C7 is lipidated: S-palmitoyl cysteine.

This sequence belongs to the Cu-Zn superoxide dismutase family. Homotrimer. Cu cation serves as cofactor. Requires Zn(2+) as cofactor.

The protein resides in the cytoplasm. The protein localises to the nucleus. The enzyme catalyses 2 superoxide + 2 H(+) = H2O2 + O2. Destroys radicals which are normally produced within the cells and which are toxic to biological systems. The protein is Superoxide dismutase [Cu-Zn] (sod1) of Paralichthys olivaceus (Bastard halibut).